We begin with the raw amino-acid sequence, 438 residues long: UDP-N-acetylmuramoylalanine--D-glutamate ligase (438 aa).

112–118 is a binding site for ATP; it reads GSNGKST.

Belongs to the MurCDEF family.

It localises to the cytoplasm. The catalysed reaction is UDP-N-acetyl-alpha-D-muramoyl-L-alanine + D-glutamate + ATP = UDP-N-acetyl-alpha-D-muramoyl-L-alanyl-D-glutamate + ADP + phosphate + H(+). It functions in the pathway cell wall biogenesis; peptidoglycan biosynthesis. Its function is as follows. Cell wall formation. Catalyzes the addition of glutamate to the nucleotide precursor UDP-N-acetylmuramoyl-L-alanine (UMA). In Shigella dysenteriae serotype 1 (strain Sd197), this protein is UDP-N-acetylmuramoylalanine--D-glutamate ligase.